A 221-amino-acid polypeptide reads, in one-letter code: MTDAVTAHEMQQYDQYTINEIGVPSLVLMERAALAGIEVLGAGQFDLSQVLVIAGLGNNGGDGVALARLLMQKGVHVDLLFVGDENRAAHNNAIQLEIAKKYGLTPVNKVKDFRQYTVIVDALFGIGLSKPVPIKLGEMIKRVNAANVPVVAIDVPSGINATTGDIMGSSIRATATVTFAYPKTGLLQGEGVKRSGSIFVKDIGIYSPAELHQFNPEIKEN.

The 202-residue stretch at 10–211 folds into the YjeF N-terminal domain; that stretch reads MQQYDQYTIN…DIGIYSPAEL (202 aa). 58-62 is a binding site for (6S)-NADPHX; that stretch reads NNGGD. Residues Asn59 and Asp121 each contribute to the K(+) site. (6S)-NADPHX is bound by residues 125 to 131 and Asp154; that span reads GIGLSKP. Position 157 (Ser157) interacts with K(+).

It belongs to the NnrE/AIBP family. Requires K(+) as cofactor.

It catalyses the reaction (6R)-NADHX = (6S)-NADHX. It carries out the reaction (6R)-NADPHX = (6S)-NADPHX. Its function is as follows. Catalyzes the epimerization of the S- and R-forms of NAD(P)HX, a damaged form of NAD(P)H that is a result of enzymatic or heat-dependent hydration. This is a prerequisite for the S-specific NAD(P)H-hydrate dehydratase to allow the repair of both epimers of NAD(P)HX. In Weissella koreensis (strain KACC 15510), this protein is NAD(P)H-hydrate epimerase.